The sequence spans 383 residues: Bifunctional enzyme IspD/IspF (383 aa).

A 2-C-methyl-D-erythritol 4-phosphate cytidylyltransferase region spans residues 1–226 (MKIAAVIVAA…ERQIMSETIT (226 aa)). A 2-C-methyl-D-erythritol 2,4-cyclodiphosphate synthase region spans residues 227–383 (VTGQGYDVHR…QAIVTARLTT (157 aa)). Residues Asp233 and His235 each contribute to the a divalent metal cation site. 4-CDP-2-C-methyl-D-erythritol 2-phosphate contacts are provided by residues 233-235 (DVH) and 259-260 (HS). Residue His267 coordinates a divalent metal cation. 4-CDP-2-C-methyl-D-erythritol 2-phosphate-binding positions include 281 to 283 (DIG), 357 to 360 (TTTE), Phe364, and Arg367.

It in the N-terminal section; belongs to the IspD/TarI cytidylyltransferase family. IspD subfamily. This sequence in the C-terminal section; belongs to the IspF family. Requires a divalent metal cation as cofactor.

It catalyses the reaction 2-C-methyl-D-erythritol 4-phosphate + CTP + H(+) = 4-CDP-2-C-methyl-D-erythritol + diphosphate. The enzyme catalyses 4-CDP-2-C-methyl-D-erythritol 2-phosphate = 2-C-methyl-D-erythritol 2,4-cyclic diphosphate + CMP. It participates in isoprenoid biosynthesis; isopentenyl diphosphate biosynthesis via DXP pathway; isopentenyl diphosphate from 1-deoxy-D-xylulose 5-phosphate: step 2/6. The protein operates within isoprenoid biosynthesis; isopentenyl diphosphate biosynthesis via DXP pathway; isopentenyl diphosphate from 1-deoxy-D-xylulose 5-phosphate: step 4/6. Functionally, bifunctional enzyme that catalyzes the formation of 4-diphosphocytidyl-2-C-methyl-D-erythritol from CTP and 2-C-methyl-D-erythritol 4-phosphate (MEP) (IspD), and catalyzes the conversion of 4-diphosphocytidyl-2-C-methyl-D-erythritol 2-phosphate (CDP-ME2P) to 2-C-methyl-D-erythritol 2,4-cyclodiphosphate (ME-CPP) with a corresponding release of cytidine 5-monophosphate (CMP) (IspF). This is Bifunctional enzyme IspD/IspF from Maricaulis maris (strain MCS10) (Caulobacter maris).